Reading from the N-terminus, the 715-residue chain is 1,4-alpha-glucan branching enzyme GlgB (715 aa).

Aspartate 399 (nucleophile) is an active-site residue. The active-site Proton donor is the glutamate 452.

The protein belongs to the glycosyl hydrolase 13 family. GlgB subfamily. As to quaternary structure, monomer.

The enzyme catalyses Transfers a segment of a (1-&gt;4)-alpha-D-glucan chain to a primary hydroxy group in a similar glucan chain.. It functions in the pathway glycan biosynthesis; glycogen biosynthesis. Catalyzes the formation of the alpha-1,6-glucosidic linkages in glycogen by scission of a 1,4-alpha-linked oligosaccharide from growing alpha-1,4-glucan chains and the subsequent attachment of the oligosaccharide to the alpha-1,6 position. The chain is 1,4-alpha-glucan branching enzyme GlgB from Rhodopseudomonas palustris (strain BisA53).